The following is a 165-amino-acid chain: Regulator of ribonuclease activity A (165 aa).

Belongs to the RraA family. In terms of assembly, homotrimer. Binds to both RNA-binding sites in the C-terminal region of Rne and to RhlB.

It localises to the cytoplasm. Its function is as follows. Globally modulates RNA abundance by binding to RNase E (Rne) and regulating its endonucleolytic activity. Can modulate Rne action in a substrate-dependent manner by altering the composition of the degradosome. Modulates RNA-binding and helicase activities of the degradosome. The chain is Regulator of ribonuclease activity A from Actinobacillus pleuropneumoniae serotype 7 (strain AP76).